The primary structure comprises 275 residues: Nurim (275 aa).

The Nuclear segment spans residues 1–4; the sequence is MASV. Residues 5–32 traverse the membrane as a helical segment; sequence TFRDGFLCVSALITFVFVFVTGADFVRF. The Perinuclear space segment spans residues 33–63; that stretch reads VSFRAINHNLSGAAPLCRDSVPWSVALRDGV. A helical membrane pass occupies residues 64–85; the sequence is VQKAVAVDVLLLVVFSLQHSLL. The Nuclear portion of the chain corresponds to 86 to 102; sequence AWTPVKRVCQSVFGVLS. A helical membrane pass occupies residues 103–119; that stretch reads RSVYCFTTAAALQILMH. The Perinuclear space segment spans residues 120-138; it reads YWRPVTSAPCLWSVSSAPW. The chain crosses the membrane as a helical span at residues 139-169; the sequence is EIWFPLICFIVHFLCWAIICSILLIFDYPEL. Residues 170-196 are Nuclear-facing; that stretch reads LGIKQVYYECLGLGDPLLLKSERAQRL. A helical membrane pass occupies residues 197 to 215; the sequence is YSHLRHPVCVELLTVLWLL. The Perinuclear space segment spans residues 216–221; sequence PSFPLD. A helical transmembrane segment spans residues 222–239; sequence RLLLAVFLTVYLILAHSL. At 240–275 the chain is on the nuclear side; that stretch reads DKQDCAYLRHQLRNKLQLFSTPLEGSEQTNDNNKLE.

The protein belongs to the nurim family.

The protein resides in the nucleus inner membrane. The chain is Nurim (nrm) from Danio rerio (Zebrafish).